The chain runs to 250 residues: Probable transcriptional regulatory protein Ppha_0657 (250 aa).

Belongs to the TACO1 family.

It localises to the cytoplasm. The chain is Probable transcriptional regulatory protein Ppha_0657 from Pelodictyon phaeoclathratiforme (strain DSM 5477 / BU-1).